The primary structure comprises 59 residues: Cecropin-A (59 aa).

The first 23 residues, 1-23 (MNFTKLFLLIAMAVLLLTGQSEA), serve as a signal peptide directing secretion. Residues 58–59 (GK) constitute a propeptide, removed in mature form (AeaeCec2).

Hemolymph (at protein level).

It is found in the secreted. Functionally, antimicrobial peptide. Antibacterial activity against Gram-negative bacteria E.coli D22 and D31, E.carotovora, K.pneumoniae, P.aeruginosa, S.typhimurium, E.cloacae B12 and X.campestris and Gram-positive bacteria A.viridans, M.luteus, B.megaterium and S.pyogenes. Possesses antifungal activity against F.oxysporum, F.culmorum and N.crassa, C.albicans, C.neoformans and S.cerevisiae. No activity against Gram-negative S.marcescens Db11, Gram-positive B.cereus, B.subtilis, B.thuringiensis, S.aureus and L.monocytogenes, the fungi A.fumigatus and B.bassiana and C.glabrata. Partially neutralizes lipopolysaccharides (LPS). Exhibits anti-inflammatory properties: inhibits LPS-induced iNOS/NOS2 transcription, nitric oxide (NO) and pro-inflammatory cytokine production in mouse macrophages and human peripheral blood mononuclear cells (PBMCs); inhibits LPS-induced activation of MAPK and NF-kappa-B signaling pathways in mouse macrophages. This chain is Cecropin-A (CECA), found in Aedes aegypti (Yellowfever mosquito).